Reading from the N-terminus, the 179-residue chain is Natural killer cells antigen CD94 (179 aa).

At 1–10 the chain is on the cytoplasmic side; that stretch reads MAVFKTTLWW. Residues 11–31 traverse the membrane as a helical; Signal-anchor for type II membrane protein segment; it reads LISGTLGIICLSLTATLGILL. The Extracellular portion of the chain corresponds to 32-179; the sequence is KNSFTKLSIE…NRYICKQQLI (148 aa). Intrachain disulfides connect Cys58–Cys70 and Cys61–Cys72. The C-type lectin domain maps to 68–175; the sequence is YRCNCYFISS…CEDKNRYICK (108 aa). Asn83 and Asn132 each carry an N-linked (GlcNAc...) asparagine glycan. Cystine bridges form between Cys89–Cys174 and Cys152–Cys166.

Can form disulfide-bonded heterodimer with NKG2 family members KLRC1 and KLRC2. KLRD1-KLRC1 heterodimer interacts with peptide-bound MHC-E-B2M heterotrimeric complex. KLRD1 plays a prominent role in directly interacting with MHC-E. KLRD1-KLRC1 interacts with much higher affinity with peptide-bound MHC-E-B2M than KLRD1-KLRC2. Interacts with the adapter protein TYROBP/DAP12; this interaction is required for cell surface expression and cell activation. Natural killer cells.

It localises to the cell membrane. Functionally, immune receptor involved in self-nonself discrimination. In complex with KLRC1 or KLRC2 on cytotoxic and regulatory lymphocyte subsets, recognizes non-classical major histocompatibility (MHC) class Ib molecule MHC-E loaded with self-peptides derived from the signal sequence of classical MHC class Ia and non-classical MHC class Ib molecules. Enables cytotoxic cells to monitor the expression of MHC class I molecules in healthy cells and to tolerate self. Primarily functions as a ligand binding subunit as it lacks the capacity to signal. KLRD1-KLRC1 acts as an immune inhibitory receptor. Key inhibitory receptor on natural killer (NK) cells that regulates their activation and effector functions. Dominantly counteracts T cell receptor signaling on a subset of memory/effector CD8-positive T cells as part of an antigen-driven response to avoid autoimmunity. On intraepithelial CD8-positive gamma-delta regulatory T cells triggers TGFB1 secretion, which in turn limits the cytotoxic programming of intraepithelial CD8-positive alpha-beta T cells, distinguishing harmless from pathogenic antigens. In MHC-E-rich tumor microenvironment, acts as an immune inhibitory checkpoint and may contribute to progressive loss of effector functions of NK cells and tumor-specific T cells, a state known as cell exhaustion. Upon MHC-E-peptide binding, transmits intracellular signals through KLRC1 immunoreceptor tyrosine-based inhibition motifs (ITIMs) by recruiting INPP5D/SHIP-1 and INPPL1/SHIP-2 tyrosine phosphatases to ITIMs, and ultimately opposing signals transmitted by activating receptors through dephosphorylation of proximal signaling molecules. Its function is as follows. KLRD1-KLRC2 acts as an immune activating receptor. On cytotoxic lymphocyte subsets recognizes MHC-E loaded with signal sequence-derived peptides from non-classical MHC class Ib MHC-G molecules, likely playing a role in the generation and effector functions of adaptive NK cells and in maternal-fetal tolerance during pregnancy. Regulates the effector functions of terminally differentiated cytotoxic lymphocyte subsets, and in particular may play a role in adaptive NK cell response to viral infection. Upon MHC-E-peptide binding, transmits intracellular signals via the adapter protein TYROBP/DAP12, triggering the phosphorylation of proximal signaling molecules and cell activation. In Pongo pygmaeus (Bornean orangutan), this protein is Natural killer cells antigen CD94 (KLRD1).